Here is a 509-residue protein sequence, read N- to C-terminus: Steroid 17-alpha-hydroxylase/17,20 lyase (509 aa).

Asn-202 contributes to the substrate binding site. Cys-442 is a heme binding site.

Belongs to the cytochrome P450 family. The cofactor is heme.

It localises to the endoplasmic reticulum membrane. The protein localises to the microsome membrane. The enzyme catalyses a C21-steroid + reduced [NADPH--hemoprotein reductase] + O2 = a 17alpha-hydroxy-C21-steroid + oxidized [NADPH--hemoprotein reductase] + H2O + H(+). The catalysed reaction is progesterone + reduced [NADPH--hemoprotein reductase] + O2 = 17alpha-hydroxyprogesterone + oxidized [NADPH--hemoprotein reductase] + H2O + H(+). It carries out the reaction pregnenolone + reduced [NADPH--hemoprotein reductase] + O2 = 17alpha-hydroxypregnenolone + oxidized [NADPH--hemoprotein reductase] + H2O + H(+). It catalyses the reaction 17alpha-hydroxyprogesterone + reduced [NADPH--hemoprotein reductase] + O2 = androst-4-ene-3,17-dione + acetate + oxidized [NADPH--hemoprotein reductase] + H2O + 2 H(+). The enzyme catalyses 17alpha-hydroxyprogesterone + reduced [NADPH--hemoprotein reductase] + O2 = 16alpha,17alpha-dihydroxyprogesterone + oxidized [NADPH--hemoprotein reductase] + H2O + H(+). The catalysed reaction is 16alpha,17alpha-dihydroxyprogesterone + reduced [NADPH--hemoprotein reductase] + O2 = 6beta,16alpha,17alpha-trihydroxyprogesterone + oxidized [NADPH--hemoprotein reductase] + H2O + H(+). It carries out the reaction 17alpha-hydroxypregnenolone + reduced [NADPH--hemoprotein reductase] + O2 = 3beta-hydroxyandrost-5-en-17-one + acetate + oxidized [NADPH--hemoprotein reductase] + H2O + 2 H(+). It catalyses the reaction 16alpha,17alpha-dihydroxypregnenolone + reduced [NADPH--hemoprotein reductase] + O2 = 3beta,16alpha-dihydroxy-androst-5-en-17-one + acetate + oxidized [NADPH--hemoprotein reductase] + H2O + 2 H(+). The enzyme catalyses 3beta-hydroxyandrost-5-en-17-one + reduced [NADPH--hemoprotein reductase] + O2 = 3beta,16alpha-dihydroxy-androst-5-en-17-one + oxidized [NADPH--hemoprotein reductase] + H2O + H(+). The catalysed reaction is androst-4-ene-3,17-dione + reduced [NADPH--hemoprotein reductase] + O2 = 16alpha-hydroxyandrost-4-ene-3,17-dione + oxidized [NADPH--hemoprotein reductase] + H2O + H(+). It participates in steroid hormone biosynthesis. The protein operates within steroid biosynthesis; glucocorticoid biosynthesis. With respect to regulation, regulated predominantly by intracellular cAMP levels. The 17,20-lyase activity is stimulated by cytochrome b5, which acts as an allosteric effector increasing the Vmax of the lyase activity. Its function is as follows. A cytochrome P450 monooxygenase involved in corticoid and androgen biosynthesis. Catalyzes 17-alpha hydroxylation of C21 steroids, which is common for both pathways. A second oxidative step, required only for androgen synthesis, involves an acyl-carbon cleavage. The 17-alpha hydroxy intermediates, as part of adrenal glucocorticoids biosynthesis pathway, are precursors of cortisol. Hydroxylates steroid hormones, pregnenolone and progesterone to form 17-alpha hydroxy metabolites, followed by the cleavage of the C17-C20 bond to form C19 steroids, dehydroepiandrosterone (DHEA) and androstenedione. Has 16-alpha hydroxylase activity. Catalyzes 16-alpha hydroxylation of 17-alpha hydroxy pregnenolone, followed by the cleavage of the C17-C20 bond to form 16-alpha-hydroxy DHEA. Also 16-alpha hydroxylates androgens, relevant for estriol synthesis. Mechanistically, uses molecular oxygen inserting one oxygen atom into a substrate, and reducing the second into a water molecule, with two electrons provided by NADPH via cytochrome P450 reductase (CPR; NADPH-ferrihemoprotein reductase). This chain is Steroid 17-alpha-hydroxylase/17,20 lyase (CYP17A1), found in Ovis aries (Sheep).